An 88-amino-acid polypeptide reads, in one-letter code: Small ribosomal subunit protein uS15 (88 aa).

Belongs to the universal ribosomal protein uS15 family. In terms of assembly, part of the 30S ribosomal subunit. Forms a bridge to the 50S subunit in the 70S ribosome, contacting the 23S rRNA.

Functionally, one of the primary rRNA binding proteins, it binds directly to 16S rRNA where it helps nucleate assembly of the platform of the 30S subunit by binding and bridging several RNA helices of the 16S rRNA. Its function is as follows. Forms an intersubunit bridge (bridge B4) with the 23S rRNA of the 50S subunit in the ribosome. This chain is Small ribosomal subunit protein uS15, found in Borrelia garinii subsp. bavariensis (strain ATCC BAA-2496 / DSM 23469 / PBi) (Borreliella bavariensis).